Reading from the N-terminus, the 498-residue chain is WD repeat-containing protein 55 homolog (498 aa).

Residues 1 to 131 (MHTHNNFKTP…ATFDLDEDDE (131 aa)) are disordered. 2 stretches are compositionally biased toward acidic residues: residues 12–23 (DEDELDDLDEDM) and 31–48 (IEQEVLNESDSDNDEYDL). Composition is skewed to low complexity over residues 67–82 (NDSSSSDDSFDPNAAD) and 93–103 (AGGVTAGGATS). WD repeat units lie at residues 154–193 (KLEDFITDICFHPDRDIIALATIIGDVHLYEYDNEANKLL), 198–237 (VHSKACRDVEFTEDGRFLLTCSKDKCVMVTDMETEKLKKL), 241–279 (AHDDAINTLHVLNENLFASGDDAGTVKLWDLRTKNAIFE), 282–321 (ELEDQITQLTTNEQSKLLLATSADGYLTTFNISARKMYVQ), 324–363 (PYEEELNCMGVYRGDSKLVVGTSKGRLYTYNWGQFGYHCD), and 408–447 (QHNMPIESLDVNASGELIASSSHNNDVRFWNVKYFEDFGD). Residues 478 to 498 (DLTKENADGDDDPGAGPSNMA) form a disordered region.

This sequence belongs to the WD repeat WDR55 family.

This chain is WD repeat-containing protein 55 homolog, found in Drosophila melanogaster (Fruit fly).